A 67-amino-acid chain; its full sequence is Phycobilisome 7.8 kDa linker polypeptide, allophycocyanin-associated, core (67 aa).

The 56-residue stretch at 1–56 folds into the CpcD-like domain; the sequence is GRLFKITACVPSQTRIRTQRELQNTYFTKLVPYENWFREQQRIQKMGGKIVKVELA.

The protein belongs to the phycobilisome linker protein family.

It is found in the cellular thylakoid membrane. Rod linker protein, associated with allophycocyanin. Linker polypeptides determine the state of aggregation and the location of the disk-shaped phycobiliprotein units within the phycobilisome and modulate their spectroscopic properties in order to mediate a directed and optimal energy transfer. This chain is Phycobilisome 7.8 kDa linker polypeptide, allophycocyanin-associated, core (apcC), found in Mastigocladus laminosus (Fischerella sp.).